We begin with the raw amino-acid sequence, 64 residues long: Large ribosomal subunit protein bL33 (64 aa).

The protein belongs to the bacterial ribosomal protein bL33 family.

The chain is Large ribosomal subunit protein bL33 from Synechococcus sp. (strain JA-2-3B'a(2-13)) (Cyanobacteria bacterium Yellowstone B-Prime).